The sequence spans 150 residues: MSLQFNTVALLLVVLILLGVLSNNSSVTISAAILLLMQQTFLAKYIPFMEKHGITLGIIILTIGVLSPIVSGKIQLPHLAVFLNWKMWLAVAVGLLVAWLGGRGVGLMGAQPVLLTGLLVGTILGVAFVGGIPVGPLIAAGILSLFLGKS.

A run of 4 helical transmembrane segments spans residues 12-34 (LVVLILLGVLSNNSSVTISAAIL), 52-72 (HGITLGIIILTIGVLSPIVSG), 79-99 (LAVFLNWKMWLAVAVGLLVAW), and 123-143 (ILGVAFVGGIPVGPLIAAGIL).

It belongs to the UPF0756 family.

Its subcellular location is the cell membrane. The chain is UPF0756 membrane protein PM0771 from Pasteurella multocida (strain Pm70).